A 250-amino-acid chain; its full sequence is Ubiquinone/menaquinone biosynthesis C-methyltransferase UbiE (250 aa).

S-adenosyl-L-methionine-binding positions include Ser73, Asp94, and 122 to 123 (NA).

The protein belongs to the class I-like SAM-binding methyltransferase superfamily. MenG/UbiE family.

The catalysed reaction is a 2-demethylmenaquinol + S-adenosyl-L-methionine = a menaquinol + S-adenosyl-L-homocysteine + H(+). It carries out the reaction a 2-methoxy-6-(all-trans-polyprenyl)benzene-1,4-diol + S-adenosyl-L-methionine = a 5-methoxy-2-methyl-3-(all-trans-polyprenyl)benzene-1,4-diol + S-adenosyl-L-homocysteine + H(+). The protein operates within quinol/quinone metabolism; menaquinone biosynthesis; menaquinol from 1,4-dihydroxy-2-naphthoate: step 2/2. It participates in cofactor biosynthesis; ubiquinone biosynthesis. Methyltransferase required for the conversion of demethylmenaquinol (DMKH2) to menaquinol (MKH2) and the conversion of 2-polyprenyl-6-methoxy-1,4-benzoquinol (DDMQH2) to 2-polyprenyl-3-methyl-6-methoxy-1,4-benzoquinol (DMQH2). In Legionella pneumophila (strain Corby), this protein is Ubiquinone/menaquinone biosynthesis C-methyltransferase UbiE.